A 394-amino-acid chain; its full sequence is Chalcone synthase 8 (394 aa).

The active site involves C165.

The protein belongs to the thiolase-like superfamily. Chalcone/stilbene synthases family.

It catalyses the reaction (E)-4-coumaroyl-CoA + 3 malonyl-CoA + 3 H(+) = 2',4,4',6'-tetrahydroxychalcone + 3 CO2 + 4 CoA. The protein operates within secondary metabolite biosynthesis; flavonoid biosynthesis. Functionally, the primary product of this enzyme is 4,2',4',6'-tetrahydroxychalcone (also termed naringenin-chalcone or chalcone) which can under specific conditions spontaneously isomerize into naringenin. The sequence is that of Chalcone synthase 8 (CHS8) from Bromheadia finlaysoniana (Orchid).